The sequence spans 264 residues: Phosphatidylserine decarboxylase proenzyme (264 aa).

Residues aspartate 86, histidine 142, and serine 226 each act as charge relay system; for autoendoproteolytic cleavage activity in the active site. Serine 226 functions as the Schiff-base intermediate with substrate; via pyruvic acid; for decarboxylase activity in the catalytic mechanism. Residue serine 226 is modified to Pyruvic acid (Ser); by autocatalysis.

The protein belongs to the phosphatidylserine decarboxylase family. PSD-B subfamily. Prokaryotic type I sub-subfamily. In terms of assembly, heterodimer of a large membrane-associated beta subunit and a small pyruvoyl-containing alpha subunit. Pyruvate is required as a cofactor. Post-translationally, is synthesized initially as an inactive proenzyme. Formation of the active enzyme involves a self-maturation process in which the active site pyruvoyl group is generated from an internal serine residue via an autocatalytic post-translational modification. Two non-identical subunits are generated from the proenzyme in this reaction, and the pyruvate is formed at the N-terminus of the alpha chain, which is derived from the carboxyl end of the proenzyme. The autoendoproteolytic cleavage occurs by a canonical serine protease mechanism, in which the side chain hydroxyl group of the serine supplies its oxygen atom to form the C-terminus of the beta chain, while the remainder of the serine residue undergoes an oxidative deamination to produce ammonia and the pyruvoyl prosthetic group on the alpha chain. During this reaction, the Ser that is part of the protease active site of the proenzyme becomes the pyruvoyl prosthetic group, which constitutes an essential element of the active site of the mature decarboxylase.

The protein localises to the cell membrane. The catalysed reaction is a 1,2-diacyl-sn-glycero-3-phospho-L-serine + H(+) = a 1,2-diacyl-sn-glycero-3-phosphoethanolamine + CO2. The protein operates within phospholipid metabolism; phosphatidylethanolamine biosynthesis; phosphatidylethanolamine from CDP-diacylglycerol: step 2/2. Functionally, catalyzes the formation of phosphatidylethanolamine (PtdEtn) from phosphatidylserine (PtdSer). The sequence is that of Phosphatidylserine decarboxylase proenzyme from Geobacillus kaustophilus (strain HTA426).